A 201-amino-acid polypeptide reads, in one-letter code: Potassium-transporting ATPase KdpC subunit (201 aa).

A helical membrane pass occupies residues 9–29 (ILVMLALTLITGLLYPLAMTV). 2 stretches are compositionally biased toward polar residues: residues 73-84 (TTAADPNDSTKT) and 91-101 (AANSSGSNLGP). The disordered stretch occupies residues 73–103 (TTAADPNDSTKTVPAPYNAANSSGSNLGPTS).

This sequence belongs to the KdpC family. In terms of assembly, the system is composed of three essential subunits: KdpA, KdpB and KdpC.

It is found in the cell inner membrane. Functionally, part of the high-affinity ATP-driven potassium transport (or Kdp) system, which catalyzes the hydrolysis of ATP coupled with the electrogenic transport of potassium into the cytoplasm. This subunit acts as a catalytic chaperone that increases the ATP-binding affinity of the ATP-hydrolyzing subunit KdpB by the formation of a transient KdpB/KdpC/ATP ternary complex. The sequence is that of Potassium-transporting ATPase KdpC subunit from Bradyrhizobium sp. (strain BTAi1 / ATCC BAA-1182).